A 271-amino-acid polypeptide reads, in one-letter code: 3-methyl-2-oxobutanoate hydroxymethyltransferase 2 (271 aa).

Mg(2+) contacts are provided by D53 and D92. Residues 53 to 54, D92, and K120 contribute to the 3-methyl-2-oxobutanoate site; that span reads DS. E122 provides a ligand contact to Mg(2+). The active-site Proton acceptor is the E189.

The protein belongs to the PanB family. As to quaternary structure, homodecamer; pentamer of dimers. The cofactor is Mg(2+).

The protein resides in the cytoplasm. The enzyme catalyses 3-methyl-2-oxobutanoate + (6R)-5,10-methylene-5,6,7,8-tetrahydrofolate + H2O = 2-dehydropantoate + (6S)-5,6,7,8-tetrahydrofolate. The protein operates within cofactor biosynthesis; (R)-pantothenate biosynthesis; (R)-pantoate from 3-methyl-2-oxobutanoate: step 1/2. Its function is as follows. Catalyzes the reversible reaction in which hydroxymethyl group from 5,10-methylenetetrahydrofolate is transferred onto alpha-ketoisovalerate to form ketopantoate. The polypeptide is 3-methyl-2-oxobutanoate hydroxymethyltransferase 2 (Burkholderia lata (strain ATCC 17760 / DSM 23089 / LMG 22485 / NCIMB 9086 / R18194 / 383)).